A 367-amino-acid polypeptide reads, in one-letter code: Aminomethyltransferase (367 aa).

Belongs to the GcvT family. The glycine cleavage system is composed of four proteins: P, T, L and H.

The enzyme catalyses N(6)-[(R)-S(8)-aminomethyldihydrolipoyl]-L-lysyl-[protein] + (6S)-5,6,7,8-tetrahydrofolate = N(6)-[(R)-dihydrolipoyl]-L-lysyl-[protein] + (6R)-5,10-methylene-5,6,7,8-tetrahydrofolate + NH4(+). In terms of biological role, the glycine cleavage system catalyzes the degradation of glycine. The sequence is that of Aminomethyltransferase from Saccharopolyspora erythraea (strain ATCC 11635 / DSM 40517 / JCM 4748 / NBRC 13426 / NCIMB 8594 / NRRL 2338).